The following is a 159-amino-acid chain: Ribosomal RNA large subunit methyltransferase H (159 aa).

S-adenosyl-L-methionine is bound by residues Leu-76 and Gly-108.

Belongs to the RNA methyltransferase RlmH family. In terms of assembly, homodimer.

It is found in the cytoplasm. The catalysed reaction is pseudouridine(1915) in 23S rRNA + S-adenosyl-L-methionine = N(3)-methylpseudouridine(1915) in 23S rRNA + S-adenosyl-L-homocysteine + H(+). Functionally, specifically methylates the pseudouridine at position 1915 (m3Psi1915) in 23S rRNA. The polypeptide is Ribosomal RNA large subunit methyltransferase H (Finegoldia magna (strain ATCC 29328 / DSM 20472 / WAL 2508) (Peptostreptococcus magnus)).